The chain runs to 355 residues: 3-isopropylmalate dehydrogenase (355 aa).

Arginine 90, arginine 100, arginine 128, and aspartate 222 together coordinate substrate. Mg(2+) is bound by residues aspartate 222, aspartate 246, and aspartate 250. 280-292 serves as a coordination point for NAD(+); it reads GSAPDIAGKGIAN.

Belongs to the isocitrate and isopropylmalate dehydrogenases family. LeuB type 1 subfamily. In terms of assembly, homodimer. It depends on Mg(2+) as a cofactor. Requires Mn(2+) as cofactor.

It is found in the cytoplasm. The enzyme catalyses (2R,3S)-3-isopropylmalate + NAD(+) = 4-methyl-2-oxopentanoate + CO2 + NADH. It participates in amino-acid biosynthesis; L-leucine biosynthesis; L-leucine from 3-methyl-2-oxobutanoate: step 3/4. Functionally, catalyzes the oxidation of 3-carboxy-2-hydroxy-4-methylpentanoate (3-isopropylmalate) to 3-carboxy-4-methyl-2-oxopentanoate. The product decarboxylates to 4-methyl-2 oxopentanoate. In Burkholderia lata (strain ATCC 17760 / DSM 23089 / LMG 22485 / NCIMB 9086 / R18194 / 383), this protein is 3-isopropylmalate dehydrogenase.